The sequence spans 869 residues: Phosphatidylethanolamine N-methyltransferase (869 aa).

Position 2 is an N-acetylserine (serine 2). Over 2–55 (SSCKTTLSEMVGSVTKDRGTINVEARTRSSNVTFKPPVTHDMVRSLFDPTLKKS) the chain is Lumenal. Residues 56–76 (LLEKCIALAIISNFFICYWVF) traverse the membrane as a helical segment. Over 77 to 86 (QRFGLQFTKY) the chain is Cytoplasmic. A helical transmembrane segment spans residues 87 to 107 (FFLVQYLFWRIAYNLGIGLVL). At 108–187 (HYQSHYETLT…EINVWLIFRQ (80 aa)) the chain is on the lumenal side. A helical membrane pass occupies residues 188 to 208 (FVDLILMQDFVTYIIYVYLSI). The Cytoplasmic portion of the chain corresponds to 209 to 212 (PYSW). A helical transmembrane segment spans residues 213–233 (VQIFNWRSLLGVILILFNIWV). Residues 234 to 258 (KLDAHRVVKDYAWYWGDFFFLEESE) are Lumenal-facing. A helical transmembrane segment spans residues 259–279 (LIFDGVFNISPHPMYSIGYLG). The Cytoplasmic portion of the chain corresponds to 280–291 (YYGLSLICNDYK). A helical transmembrane segment spans residues 292 to 310 (VLLVSVFGHYSQFLFLKYV). The Lumenal segment spans residues 311 to 362 (ENPHIERTYGDGTDSDSQMNSRIDDLISKENYDYSRPLINMGLSFNNFNKLR). A helical membrane pass occupies residues 363–383 (FTDYFTIGTVAALMLGTIMNA). Residues 384–389 (RFINLN) are Cytoplasmic-facing. Residues 390–410 (YLFITVFVTKLVSWLFISTIL) form a helical membrane-spanning segment. Residues 411-439 (YKQSQSKWFTRLFLENGYTQVYSYEQWQF) are Lumenal-facing. A helical membrane pass occupies residues 440-460 (IYNYYLVLTYTLMIIHTGLQI). Topologically, residues 461–463 (WSN) are cytoplasmic. A helical transmembrane segment spans residues 464–484 (FSNINNSQLIFGLILVALQTW). The Lumenal segment spans residues 485-534 (CDKETRLAISDFGWFYGDFFLSNYISTRKLTSQGIYRYLNHPEAVLGVVG). Residues 535-555 (VWGTVLMTNFAVTNIILAVLW) traverse the membrane as a helical segment. Residues 556 to 869 (TLTNFILVKF…DIKQTLDSLA (314 aa)) are Cytoplasmic-facing.

The protein belongs to the class VI-like SAM-binding methyltransferase superfamily. CHO2 family.

Its subcellular location is the endoplasmic reticulum membrane. The enzyme catalyses a 1,2-diacyl-sn-glycero-3-phosphoethanolamine + S-adenosyl-L-methionine = a 1,2-diacyl-sn-glycero-3-phospho-N-methylethanolamine + S-adenosyl-L-homocysteine + H(+). Its pathway is phospholipid metabolism; phosphatidylcholine biosynthesis. Its function is as follows. Catalyzes the first step of the methylation pathway of phosphatidylcholine biosynthesis, the SAM-dependent methylation of phosphatidylethanolamine (PE) to phosphatidylmonomethylethanolamine (PMME). Preferentially converts di-C16:1 substrates. The polypeptide is Phosphatidylethanolamine N-methyltransferase (Saccharomyces cerevisiae (strain ATCC 204508 / S288c) (Baker's yeast)).